A 359-amino-acid polypeptide reads, in one-letter code: Peptide chain release factor 1 (359 aa).

An N5-methylglutamine modification is found at Gln-236. The interval 288–308 (QDEQDAERKSTIGTGDRSERI) is disordered. Positions 293–308 (AERKSTIGTGDRSERI) are enriched in basic and acidic residues.

The protein belongs to the prokaryotic/mitochondrial release factor family. In terms of processing, methylated by PrmC. Methylation increases the termination efficiency of RF1.

It localises to the cytoplasm. Functionally, peptide chain release factor 1 directs the termination of translation in response to the peptide chain termination codons UAG and UAA. The sequence is that of Peptide chain release factor 1 from Streptococcus uberis (strain ATCC BAA-854 / 0140J).